Reading from the N-terminus, the 565-residue chain is NAD-dependent malic enzyme (565 aa).

Catalysis depends on tyrosine 104, which acts as the Proton donor. Arginine 157 is a binding site for NAD(+). Lysine 175 acts as the Proton acceptor in catalysis. A divalent metal cation-binding residues include glutamate 246, aspartate 247, and aspartate 270. Residues aspartate 270 and asparagine 418 each contribute to the NAD(+) site.

The protein belongs to the malic enzymes family. Homotetramer. Requires Mg(2+) as cofactor. Mn(2+) serves as cofactor.

It catalyses the reaction (S)-malate + NAD(+) = pyruvate + CO2 + NADH. The enzyme catalyses oxaloacetate + H(+) = pyruvate + CO2. This Escherichia coli O157:H7 protein is NAD-dependent malic enzyme.